Consider the following 172-residue polypeptide: Adenine phosphoribosyltransferase (172 aa).

Belongs to the purine/pyrimidine phosphoribosyltransferase family. Homodimer.

The protein resides in the cytoplasm. It catalyses the reaction AMP + diphosphate = 5-phospho-alpha-D-ribose 1-diphosphate + adenine. The protein operates within purine metabolism; AMP biosynthesis via salvage pathway; AMP from adenine: step 1/1. Catalyzes a salvage reaction resulting in the formation of AMP, that is energically less costly than de novo synthesis. The polypeptide is Adenine phosphoribosyltransferase (Streptococcus thermophilus (strain ATCC BAA-250 / LMG 18311)).